A 108-amino-acid chain; its full sequence is uncharacterized protein (108 aa).

A helical transmembrane segment spans residues 59-81 (NIVIILWKIMVVIISSIIHRTYI).

It localises to the membrane. This is an uncharacterized protein from Rickettsia conorii (strain ATCC VR-613 / Malish 7).